Here is a 244-residue protein sequence, read N- to C-terminus: Biosynthetic peptidoglycan transglycosylase (244 aa).

A helical transmembrane segment spans residues 23–43 (LVVIGAWLAGILLFSFLPVPF).

This sequence belongs to the glycosyltransferase 51 family.

Its subcellular location is the cell inner membrane. The enzyme catalyses [GlcNAc-(1-&gt;4)-Mur2Ac(oyl-L-Ala-gamma-D-Glu-L-Lys-D-Ala-D-Ala)](n)-di-trans,octa-cis-undecaprenyl diphosphate + beta-D-GlcNAc-(1-&gt;4)-Mur2Ac(oyl-L-Ala-gamma-D-Glu-L-Lys-D-Ala-D-Ala)-di-trans,octa-cis-undecaprenyl diphosphate = [GlcNAc-(1-&gt;4)-Mur2Ac(oyl-L-Ala-gamma-D-Glu-L-Lys-D-Ala-D-Ala)](n+1)-di-trans,octa-cis-undecaprenyl diphosphate + di-trans,octa-cis-undecaprenyl diphosphate + H(+). It participates in cell wall biogenesis; peptidoglycan biosynthesis. In terms of biological role, peptidoglycan polymerase that catalyzes glycan chain elongation from lipid-linked precursors. This chain is Biosynthetic peptidoglycan transglycosylase, found in Pectobacterium carotovorum subsp. carotovorum (strain PC1).